The primary structure comprises 367 residues: Phosphoribosylaminoimidazole-succinocarboxamide synthase (367 aa).

The protein belongs to the SAICAR synthetase family.

The enzyme catalyses 5-amino-1-(5-phospho-D-ribosyl)imidazole-4-carboxylate + L-aspartate + ATP = (2S)-2-[5-amino-1-(5-phospho-beta-D-ribosyl)imidazole-4-carboxamido]succinate + ADP + phosphate + 2 H(+). It participates in purine metabolism; IMP biosynthesis via de novo pathway; 5-amino-1-(5-phospho-D-ribosyl)imidazole-4-carboxamide from 5-amino-1-(5-phospho-D-ribosyl)imidazole-4-carboxylate: step 1/2. In Shewanella halifaxensis (strain HAW-EB4), this protein is Phosphoribosylaminoimidazole-succinocarboxamide synthase.